Here is a 427-residue protein sequence, read N- to C-terminus: Trigger factor (427 aa).

The PPIase FKBP-type domain occupies 163–248 (GDTVVIDFVG…IHEVKEKEVP (86 aa)).

The protein belongs to the FKBP-type PPIase family. Tig subfamily.

It localises to the cytoplasm. It carries out the reaction [protein]-peptidylproline (omega=180) = [protein]-peptidylproline (omega=0). Functionally, involved in protein export. Acts as a chaperone by maintaining the newly synthesized protein in an open conformation. Functions as a peptidyl-prolyl cis-trans isomerase. This Streptococcus sanguinis (strain SK36) protein is Trigger factor.